A 456-amino-acid polypeptide reads, in one-letter code: E3 ubiquitin-protein ligase RNF25 (456 aa).

An RWD domain is found at 18–127; sequence SEVEVLESIY…EKGKEILTDN (110 aa). Zn(2+) is bound by residues C134, C137, C152, H154, H157, C160, C195, and C198. The RING-type zinc-finger motif lies at 134-199; it reads CVICLYGFQE…AVGVQCPVCR (66 aa). The segment at 269–456 is disordered; sequence LEPESAVDVS…PLGLESEEGS (188 aa). Polar residues predominate over residues 288-332; sequence SAEQSTSLADQSTLPTSLPMTTQYTYEKTSGAGPNQQRPGETQKS. Composition is skewed to basic and acidic residues over residues 364–388 and 410–421; these read SEIH…EPRN and RTRDCARWERSK.

The protein belongs to the RNF25 family. In terms of assembly, interacts with UBE2D2, and may also interact with UBE2E1 and UBE2E3. Interacts with RELA/p65. Ubiquitinated; autoubiquitinated. In terms of tissue distribution, ubiquitous.

Its subcellular location is the cytoplasm. It carries out the reaction S-ubiquitinyl-[E2 ubiquitin-conjugating enzyme]-L-cysteine + [acceptor protein]-L-lysine = [E2 ubiquitin-conjugating enzyme]-L-cysteine + N(6)-ubiquitinyl-[acceptor protein]-L-lysine.. It participates in protein modification; protein ubiquitination. E3 ubiquitin-protein ligase that plays a key role in the RNF14-RNF25 translation quality control pathway, a pathway that takes place when a ribosome has stalled during translation, and which promotes ubiquitination and degradation of translation factors on stalled ribosomes. Catalyzes ubiquitination of RPS27A in response to ribosome collisions, promoting activation of RNF14. RNF25 catalyzes ubiquitination of other ribosomal proteins on stalled ribosomes, such as RPL0, RPL1, RPL12, RPS13 and RPS17. Also involved in ubiquitination and degradation of stalled ETF1/eRF1. Independently of its function in the response to stalled ribosomes, mediates ubiquitination and subsequent proteasomal degradation of NKD2. May also stimulate transcription mediated by NF-kappa-B via its interaction with RELA/p65. In Mus musculus (Mouse), this protein is E3 ubiquitin-protein ligase RNF25.